The primary structure comprises 210 residues: Glycerol-3-phosphate acyltransferase (210 aa).

A run of 5 helical transmembrane segments spans residues 10–30, 59–79, 87–107, 116–136, and 161–181; these read ALILTGVLGYLLGSIPFGIVI, PAALATLLLDSGKGAIAVLIA, AAQLAAFTSFLGHLYPVWLGF, FLGTLIALAWPVGLACCLTWL, and LLLGQGQMAALGLVLAVLIFI.

It belongs to the PlsY family. In terms of assembly, probably interacts with PlsX.

The protein resides in the cell inner membrane. It carries out the reaction an acyl phosphate + sn-glycerol 3-phosphate = a 1-acyl-sn-glycero-3-phosphate + phosphate. The protein operates within lipid metabolism; phospholipid metabolism. Its function is as follows. Catalyzes the transfer of an acyl group from acyl-phosphate (acyl-PO(4)) to glycerol-3-phosphate (G3P) to form lysophosphatidic acid (LPA). This enzyme utilizes acyl-phosphate as fatty acyl donor, but not acyl-CoA or acyl-ACP. This Cereibacter sphaeroides (strain ATCC 17025 / ATH 2.4.3) (Rhodobacter sphaeroides) protein is Glycerol-3-phosphate acyltransferase.